A 264-amino-acid polypeptide reads, in one-letter code: tRNA pseudouridine synthase A (264 aa).

Asp51 serves as the catalytic Nucleophile. Tyr109 serves as a coordination point for substrate.

It belongs to the tRNA pseudouridine synthase TruA family. As to quaternary structure, homodimer.

It catalyses the reaction uridine(38/39/40) in tRNA = pseudouridine(38/39/40) in tRNA. In terms of biological role, formation of pseudouridine at positions 38, 39 and 40 in the anticodon stem and loop of transfer RNAs. In Photorhabdus laumondii subsp. laumondii (strain DSM 15139 / CIP 105565 / TT01) (Photorhabdus luminescens subsp. laumondii), this protein is tRNA pseudouridine synthase A.